The primary structure comprises 147 residues: Putative pre-16S rRNA nuclease (147 aa).

The protein belongs to the YqgF nuclease family.

It localises to the cytoplasm. Could be a nuclease involved in processing of the 5'-end of pre-16S rRNA. This is Putative pre-16S rRNA nuclease from Latilactobacillus sakei subsp. sakei (strain 23K) (Lactobacillus sakei subsp. sakei).